The chain runs to 278 residues: Multidrug-efflux transporter 1 regulator (278 aa).

An HTH merR-type domain is found at 5 to 75 (YYSIGEVSKL…LEEMKKAQDL (71 aa)). The H-T-H motif DNA-binding region spans 8–27 (IGEVSKLANVSIKALRYYDK).

As to quaternary structure, binds DNA as a homodimer.

Its function is as follows. Activates transcription of the bmr gene in response to structurally dissimilar drugs. Binds rhodamine as an inducer. This is Multidrug-efflux transporter 1 regulator (bmrR) from Bacillus subtilis (strain 168).